A 1450-amino-acid chain; its full sequence is Protein TIC 214 (1450 aa).

6 helical membrane-spanning segments follow: residues 29–49 (FGLYYGFLTTLPISFSHIVVI), 61–81 (VMAFCGLITGQLCMIGTIYYT), 86–106 (LFIKPHLILLLSIIYSFFYWQ), 132–152 (FFDSFVFQILNPILLPTPIFF), 166–186 (LNFFLSFFIGSLIGNFLFFNA), and 213–233 (IIPIVFCICLIPIAKYSHIPF).

This sequence belongs to the TIC214 family. Part of the Tic complex.

The protein resides in the plastid. Its subcellular location is the chloroplast inner membrane. Functionally, involved in protein precursor import into chloroplasts. May be part of an intermediate translocation complex acting as a protein-conducting channel at the inner envelope. This Chaetosphaeridium globosum (Charophycean green alga) protein is Protein TIC 214.